The primary structure comprises 92 residues: C-C motif chemokine 4 (92 aa).

The first 23 residues, 1-23 (MKLCVTVLSLLMLVAAFCSPALS), serve as a signal peptide directing secretion. 2 disulfide bridges follow: cysteine 34-cysteine 58 and cysteine 35-cysteine 74.

It belongs to the intercrine beta (chemokine CC) family. Homodimer and heterodimer of MIP-1-alpha(4-69) and MIP-1-beta(3-69). In terms of processing, N-terminal processed form MIP-1-beta(3-69) is produced by proteolytic cleavage after secretion from peripheral blood lymphocytes.

The protein localises to the secreted. In terms of biological role, monokine with inflammatory and chemokinetic properties. Binds to CCR5. One of the major HIV-suppressive factors produced by CD8+ T-cells. Recombinant MIP-1-beta induces a dose-dependent inhibition of different strains of HIV-1, HIV-2, and simian immunodeficiency virus (SIV). The processed form MIP-1-beta(3-69) retains the abilities to induce down-modulation of surface expression of the chemokine receptor CCR5 and to inhibit the CCR5-mediated entry of HIV-1 in T-cells. MIP-1-beta(3-69) is also a ligand for CCR1 and CCR2 isoform B. The chain is C-C motif chemokine 4 (CCL4) from Homo sapiens (Human).